Consider the following 298-residue polypeptide: Probable protein phosphatase 2C 26 (298 aa).

Positions 48-295 (SVGIHAIPHP…DDVTVIVAKV (248 aa)) constitute a PPM-type phosphatase domain. Positions 82, 83, 213, and 286 each coordinate Mn(2+).

This sequence belongs to the PP2C family. Mg(2+) is required as a cofactor. It depends on Mn(2+) as a cofactor.

It carries out the reaction O-phospho-L-seryl-[protein] + H2O = L-seryl-[protein] + phosphate. It catalyses the reaction O-phospho-L-threonyl-[protein] + H2O = L-threonyl-[protein] + phosphate. This Arabidopsis thaliana (Mouse-ear cress) protein is Probable protein phosphatase 2C 26.